The chain runs to 581 residues: DNA polymerase alpha subunit B (581 aa).

It belongs to the DNA polymerase alpha subunit B family. DNA polymerase alpha:primase is a four subunit enzyme complex, which is assembled throughout the cell cycle, and consists of the two DNA polymerase subunits A and B, and the DNA primase large and small subunits. Subunit B binds to subunit A.

The protein resides in the nucleus. May play an essential role at the early stage of chromosomal DNA replication by coupling the polymerase alpha/primase complex to the cellular replication machinery. Required for the distribution of pie-1 in cell divsion. In Caenorhabditis elegans, this protein is DNA polymerase alpha subunit B (div-1).